The chain runs to 462 residues: Phosphoglycerate kinase, chloroplastic (462 aa).

The N-terminal 61 residues, 1–61 (MALSMKMRAN…AGRSRIVVEA (61 aa)), are a transit peptide targeting the chloroplast. (2R)-3-phosphoglycerate contacts are provided by alanine 83, aspartate 84, asparagine 86, arginine 101, serine 123, histidine 124, glycine 126, arginine 127, arginine 183, histidine 215, and arginine 216. An ADP-binding site is contributed by glycine 261. Glycine 261 is a CDP binding site. The AMP site is built by lysine 263 and lysine 267. Position 267 (lysine 267) interacts with ATP. Glycine 285 provides a ligand contact to ADP. Glycine 285 contacts CDP. 2 residues coordinate AMP: glycine 286 and glycine 358. 2 residues coordinate ATP: glycine 286 and glycine 358. Positions 383 and 388 each coordinate CDP. Phenylalanine 388 lines the ADP pocket. An AMP-binding site is contributed by glutamate 389. Glutamate 389, aspartate 420, and serine 421 together coordinate ATP. A Mg(2+)-binding site is contributed by aspartate 420.

The protein belongs to the phosphoglycerate kinase family. Monomer. Mg(2+) is required as a cofactor.

Its subcellular location is the plastid. It is found in the chloroplast. It catalyses the reaction (2R)-3-phosphoglycerate + ATP = (2R)-3-phospho-glyceroyl phosphate + ADP. Its pathway is carbohydrate biosynthesis; Calvin cycle. The polypeptide is Phosphoglycerate kinase, chloroplastic (PGK) (Volvox carteri (Green alga)).